The primary structure comprises 768 residues: Mitochondrial 15S rRNA processing factor CCM1 (768 aa).

The transit peptide at 1 to 90 directs the protein to the mitochondrion; the sequence is MIRLIRWNNV…RSFTKVIAQH (90 aa). Disordered stretches follow at residues 28-65 and 90-114; these read NKRK…NTGS and HLKP…LPPI. Over residues 43–53 the composition is skewed to basic and acidic residues; it reads NRKDGDIEPYR. Polar residues predominate over residues 55–65; the sequence is TDQNQTPNTGS. PPR repeat units follow at residues 274–308, 309–344, 347–381, 382–417, and 418–452; these read KIDH…NIEI, SKMI…SQKT, DEKV…GMNV, NQNL…GWVP, and NLQT…NSVT. Residues 583–596 are compositionally biased toward basic and acidic residues; the sequence is IEPRQDEPTEKATT. Positions 583-609 are disordered; it reads IEPRQDEPTEKATTTEEQNASSETDNN. A compositionally biased stretch (polar residues) spans 597 to 609; it reads TEEQNASSETDNN. The stretch at 634–664 is one PPR 6 repeat; that stretch reads DSYLYNLAIKAAGKFKNYGFAQEILHERGQF.

This sequence belongs to the CCM1 family. In terms of assembly, binds to mitochondrial small subunit 15S rRNA.

It is found in the mitochondrion. In terms of biological role, regulates mitochondrial small subunit maturation by controlling 15S rRNA 5'-end processing. Localizes to the 5' precursor of the 15S rRNA in a position that is subsequently occupied by mS47 in the mature yeast mtSSU. Uses structure and sequence-specific RNA recognition, binding to a single-stranded region of the precursor and specifically recognizing bases -6 to -1. The exchange of Ccm1 for mS47 is coupled to the irreversible removal of precursor rRNA that is accompanied by conformational changes of the mitoribosomal proteins uS5m and mS26. These conformational changes signal completion of 5'-end rRNA processing through protection of the mature 5'-end of the 15S rRNA and stabilization of mS47. The removal of the 5' precursor together with the dissociation of Ccm1 may be catalyzed by the 5'-3' exoribonuclease Pet127. Involved in the specific removal of group I introns in mitochondrial encoded transcripts. The chain is Mitochondrial 15S rRNA processing factor CCM1 (CCM1) from Candida albicans (strain SC5314 / ATCC MYA-2876) (Yeast).